The sequence spans 269 residues: dITP/XTP pyrophosphatase (269 aa).

Position 22-27 (22-27) interacts with substrate; it reads SNNAHK. Asp-82 (proton acceptor) is an active-site residue. Position 82 (Asp-82) interacts with Mg(2+). Substrate is bound by residues Ser-83, 165-168, Lys-188, and 193-194; these read FGYD and HR.

This sequence belongs to the HAM1 NTPase family. In terms of assembly, homodimer. Mg(2+) is required as a cofactor.

It catalyses the reaction XTP + H2O = XMP + diphosphate + H(+). The catalysed reaction is dITP + H2O = dIMP + diphosphate + H(+). It carries out the reaction ITP + H2O = IMP + diphosphate + H(+). Functionally, pyrophosphatase that catalyzes the hydrolysis of nucleoside triphosphates to their monophosphate derivatives, with a high preference for the non-canonical purine nucleotides XTP (xanthosine triphosphate), dITP (deoxyinosine triphosphate) and ITP. Seems to function as a house-cleaning enzyme that removes non-canonical purine nucleotides from the nucleotide pool, thus preventing their incorporation into DNA/RNA and avoiding chromosomal lesions. The protein is dITP/XTP pyrophosphatase of Treponema pallidum (strain Nichols).